The following is a 319-amino-acid chain: Probable NAD(P)H-dependent D-xylose reductase xyl1 (319 aa).

Tyrosine 50 acts as the Proton donor in catalysis. Residue histidine 112 participates in substrate binding. Residues 166–167 (SN), 215–224 (SSFGPLSFLE), and 271–281 (KSNNPTRLSQN) each bind NAD(+).

This sequence belongs to the aldo/keto reductase family.

It carries out the reaction xylitol + NAD(+) = D-xylose + NADH + H(+). The enzyme catalyses xylitol + NADP(+) = D-xylose + NADPH + H(+). The protein operates within carbohydrate metabolism; D-xylose degradation. Its function is as follows. Catalyzes the initial reaction in the xylose utilization pathway by reducing D-xylose into xylitol. Xylose is a major component of hemicelluloses such as xylan. Most fungi utilize D-xylose via three enzymatic reactions, xylose reductase (XR), xylitol dehydrogenase (XDH), and xylulokinase, to form xylulose 5-phosphate, which enters pentose phosphate pathway. The chain is Probable NAD(P)H-dependent D-xylose reductase xyl1 (xyl1) from Aspergillus oryzae (strain ATCC 42149 / RIB 40) (Yellow koji mold).